We begin with the raw amino-acid sequence, 248 residues long: Small ribosomal subunit protein uS3 (248 aa).

The 69-residue stretch at 38–106 (VREYLVKTLD…QVALNILEVK (69 aa)) folds into the KH type-2 domain. Positions 213–230 (ESEINAPAERRGRGDRNG) are enriched in basic and acidic residues. A disordered region spans residues 213–248 (ESEINAPAERRGRGDRNGRPRRGGQRRQRSEQKQEG).

The protein belongs to the universal ribosomal protein uS3 family. As to quaternary structure, part of the 30S ribosomal subunit. Forms a tight complex with proteins S10 and S14.

Binds the lower part of the 30S subunit head. Binds mRNA in the 70S ribosome, positioning it for translation. The protein is Small ribosomal subunit protein uS3 of Corynebacterium diphtheriae (strain ATCC 700971 / NCTC 13129 / Biotype gravis).